A 21-amino-acid chain; its full sequence is Agglutinin beta-2 chain (21 aa).

Polar residues predominate over residues 1–10; it reads NEQSGKSQTV. The interval 1-21 is disordered; that stretch reads NEQSGKSQTVIVGPWGAQVST.

This sequence belongs to the jacalin lectin family. Tetramer of four alpha chains associated with two or four beta chains.

In terms of biological role, D-galactose-specific lectin, binds the T-antigen structure Gal-beta1,3-GalNAc (Thomsen-Friedenreich-antigen-specific lectin). Potent and selective stimulant of distinct T- and B-cell functions. Shows a unique ability to specifically recognize IgA-1 from human serum. The polypeptide is Agglutinin beta-2 chain (Artocarpus integer (Jack fruit)).